We begin with the raw amino-acid sequence, 707 residues long: Polyribonucleotide nucleotidyltransferase (707 aa).

Mg(2+)-binding residues include aspartate 486 and aspartate 492. A KH domain is found at 553 to 612; that stretch reads PRIHTIKINPEKIKDVIGKGGSVIRALTEETGTTIEIEDDGTVKIAATDGDKAKHAIRRI. Positions 622-690 constitute an S1 motif domain; it reads GRIYQGKVTR…RQGRVRLSIK (69 aa).

Belongs to the polyribonucleotide nucleotidyltransferase family. Component of the RNA degradosome, which is a multiprotein complex involved in RNA processing and mRNA degradation. Requires Mg(2+) as cofactor.

It localises to the cytoplasm. It catalyses the reaction RNA(n+1) + phosphate = RNA(n) + a ribonucleoside 5'-diphosphate. Involved in mRNA degradation. Catalyzes the phosphorolysis of single-stranded polyribonucleotides processively in the 3'- to 5'-direction. This chain is Polyribonucleotide nucleotidyltransferase, found in Edwardsiella ictaluri (strain 93-146).